Reading from the N-terminus, the 530-residue chain is MEQARPIRRALLSVSDKTGILEFAKALNERGVALLSTGGTAKLLADAGLPVTEVSDYTGFPEMMDGRVKTLHPKVHGGILGRREQDDAIMAQHAISPIDMVVVNLYPFAATVAKPGCTLADAVENIDIGGPTMVRSAAKNHKDVAIVVKAADYDRVIREMDGNGNSLKLATRFDLAIAAFEHTAAYDGMIANYFGTMVPSYGDNKEGDEESRFPRTFNSQFIKKQDMRYGENSHQAAAFYAEEQAAPGSVASAIQLQGKALSYNNIADTDAALECVKEFDQPACVIVKHANPCGVAIGSDLLSAYERAWQTDPTSAFGGIIAFNRELDGATAKAIVERQFVEVIIAPTVSQAARDAVAAKQNVRLLECGQWTAPAQGFDFKRVNGGLLVQERDLGMVTLGDLTVVSKRQPTEAELNDLLFCWKVAKFVKSNAIVYAKDGQTIGVGAGQMSRVYSAKIAGIKAEDEGLTVAGSVMASDAFFPFRDGIDAAAAAGISCVIQPGGSMRDQEVIDAADEHGMCMLFTNMRHFRH.

The MGS-like domain maps to 1 to 148; the sequence is MEQARPIRRA…KNHKDVAIVV (148 aa).

It belongs to the PurH family.

The enzyme catalyses (6R)-10-formyltetrahydrofolate + 5-amino-1-(5-phospho-beta-D-ribosyl)imidazole-4-carboxamide = 5-formamido-1-(5-phospho-D-ribosyl)imidazole-4-carboxamide + (6S)-5,6,7,8-tetrahydrofolate. It carries out the reaction IMP + H2O = 5-formamido-1-(5-phospho-D-ribosyl)imidazole-4-carboxamide. Its pathway is purine metabolism; IMP biosynthesis via de novo pathway; 5-formamido-1-(5-phospho-D-ribosyl)imidazole-4-carboxamide from 5-amino-1-(5-phospho-D-ribosyl)imidazole-4-carboxamide (10-formyl THF route): step 1/1. The protein operates within purine metabolism; IMP biosynthesis via de novo pathway; IMP from 5-formamido-1-(5-phospho-D-ribosyl)imidazole-4-carboxamide: step 1/1. This is Bifunctional purine biosynthesis protein PurH from Aeromonas hydrophila subsp. hydrophila (strain ATCC 7966 / DSM 30187 / BCRC 13018 / CCUG 14551 / JCM 1027 / KCTC 2358 / NCIMB 9240 / NCTC 8049).